A 94-amino-acid chain; its full sequence is uncharacterized protein (94 aa).

This is an uncharacterized protein from Homo sapiens (Human).